Consider the following 395-residue polypeptide: GDP-mannose 4,6 dehydratase (395 aa).

Polar residues-rich tracts occupy residues 1–13 (MLNTRLIAMSTSD) and 24–36 (ESSSNGSKDQNGT). Residues 1 to 44 (MLNTRLIAMSTSDGAPETKKQRPESSSNGSKDQNGTEAGAEGDS) form a disordered region. NADP(+) contacts are provided by residues 53–58 (GITGQD), 109–110 (DM), 131–135 (LAAQS), and Tyr146. The active site involves Thr178. Catalysis depends on nucleophile residues Glu180 and Tyr202. Positions 206, 232, and 237 each coordinate NADP(+).

This sequence belongs to the NAD(P)-dependent epimerase/dehydratase family. GDP-mannose 4,6-dehydratase subfamily. It depends on NADP(+) as a cofactor.

The catalysed reaction is GDP-alpha-D-mannose = GDP-4-dehydro-alpha-D-rhamnose + H2O. Its pathway is nucleotide-sugar biosynthesis; GDP-L-fucose biosynthesis via de novo pathway; GDP-L-fucose from GDP-alpha-D-mannose: step 1/2. Functionally, catalyzes the conversion of GDP-D-mannose to GDP-4-dehydro-6-deoxy-D-mannose (also known as GDP-4-keto-6-deoxy-D-mannose or GDP-4-dehydro-alpha-D-rhamnose), an essential step in the synthesis of GDP-fucose from GDP-mannose. This Drosophila melanogaster (Fruit fly) protein is GDP-mannose 4,6 dehydratase (Gmd).